The primary structure comprises 473 residues: MRKSLITLGLASVIGTSSFLIPFTSKTASAETLDEKKQKIESKQSEVASSIEAKEKELTELQENQSKIEKELKDINDKALDTSNKIEDKKEENDKTKEEIKKLKKEIKETEARIEKRNEILKKRVRSLQESGGSQGYIDVLLGSTSFGDFISRATAVSSIVDADKDLIKQQEQDKAKLEDSEADLNDKLKEVQAALAKLETMQKDLDKQLNEKDKLFDEAKASQKKTAKAISELKSEASELANQKANTEAEQARIKKEQEAAAALIKKQEEAQKASDETQTDDSQTATTESSKASSSDDSSDNSSDNSSNGSSNSSSNGSSSKKSSGSNSNSGGTVISNSGGIEGAISVGSSIVGQSPYKFGGGRTQSDINNRIFDCSSFVRWAYASAGVNLGPVGGTTTDTLVGRGQAVSASEMKRGDLVFFDTYKTNGHVGIYLGNGTFLNDNTSHGVSVDSMSNPYWKAAFKGVVRRVVQ.

An N-terminal signal peptide occupies residues 1–30 (MRKSLITLGLASVIGTSSFLIPFTSKTASA). Disordered regions lie at residues 31 to 52 (ETLD…SSIE), 79 to 98 (ALDT…KTKE), and 237 to 337 (EASE…GTVI). Over residues 33–44 (LDEKKQKIESKQ) the composition is skewed to basic and acidic residues. A compositionally biased stretch (polar residues) spans 241–250 (LANQKANTEA). Basic and acidic residues-rich tracts occupy residues 251–260 (EQARIKKEQE) and 267–277 (KKQEEAQKASD). The segment covering 291–337 (SSKASSSDDSSDNSSDNSSNGSSNSSSNGSSSKKSSGSNSNSGGTVI) has biased composition (low complexity). The NlpC/P60 domain maps to 340–471 (SGGIEGAISV…AAFKGVVRRV (132 aa)). Residue Cys377 is the Nucleophile of the active site. His431 (proton acceptor) is an active-site residue. Residue Asn443 is part of the active site.

Belongs to the peptidase C40 family. Post-translationally, identified in the extracellular proteome as a number of processing products of about 50 and 30 kDa.

It is found in the secreted. Its subcellular location is the cell wall. With respect to regulation, detected in exponentially growing cells, the 50 and 30 kDa processing products disappear upon entry into stationary phase with the concomitant appearance of a 20 kDa products. The 50 kDa form persists in the absence of extracellular proteases. The C-terminal part of CwlO shows a cell wall hydrolytic DL-endopeptidase activity. This Bacillus subtilis (strain 168) protein is Peptidoglycan DL-endopeptidase CwlO (cwlO).